The sequence spans 298 residues: Zinc import ATP-binding protein ZnuC (298 aa).

An ABC transporter domain is found at 17 to 232; that stretch reads IELRNAGVYR…PEYVRLFGSR (216 aa). ATP is bound at residue 49–56; the sequence is GQNGAGKS. Residues 273–298 form a disordered region; that stretch reads RGHCHVEDGHHHDHEHHHHEGGQPRA. Positions 276–298 are enriched in basic and acidic residues; sequence CHVEDGHHHDHEHHHHEGGQPRA.

Belongs to the ABC transporter superfamily. Zinc importer (TC 3.A.1.15.5) family. As to quaternary structure, the complex is composed of two ATP-binding proteins (ZnuC), two transmembrane proteins (ZnuB) and a solute-binding protein (ZnuA).

The protein resides in the cell inner membrane. The enzyme catalyses Zn(2+)(out) + ATP(in) + H2O(in) = Zn(2+)(in) + ADP(in) + phosphate(in) + H(+)(in). Functionally, part of the ABC transporter complex ZnuABC involved in zinc import. Responsible for energy coupling to the transport system. The protein is Zinc import ATP-binding protein ZnuC of Brucella melitensis biotype 1 (strain ATCC 23456 / CCUG 17765 / NCTC 10094 / 16M).